We begin with the raw amino-acid sequence, 457 residues long: C4-dicarboxylate transport protein (457 aa).

The next 9 helical transmembrane spans lie at 22 to 42 (FQVV…PAFA), 55 to 75 (LVKM…IAGM), 90 to 110 (VYFL…AHVV), 138 to 158 (LTLV…AFTG), 168 to 188 (GPNI…LALV), 209 to 229 (LVHI…AFTI), 242 to 262 (WLVG…LGVV), 335 to 357 (LFIA…LAVA), and 376 to 396 (AATL…ILGV).

It belongs to the dicarboxylate/amino acid:cation symporter (DAACS) (TC 2.A.23) family.

Its subcellular location is the cell inner membrane. Functionally, responsible for the transport of dicarboxylates such as succinate, fumarate, and malate from the periplasm across the membrane. This chain is C4-dicarboxylate transport protein, found in Xanthomonas oryzae pv. oryzae (strain MAFF 311018).